The primary structure comprises 145 residues: Bacilliredoxin ABC2045 (145 aa).

This sequence belongs to the bacilliredoxin family.

This is Bacilliredoxin ABC2045 from Shouchella clausii (strain KSM-K16) (Alkalihalobacillus clausii).